Consider the following 351-residue polypeptide: Uroporphyrinogen decarboxylase (351 aa).

Residues 26 to 30 (RQAGR), Phe45, Asp76, Tyr153, Ser208, and His323 contribute to the substrate site.

The protein belongs to the uroporphyrinogen decarboxylase family. Homodimer.

It localises to the cytoplasm. It carries out the reaction uroporphyrinogen III + 4 H(+) = coproporphyrinogen III + 4 CO2. It participates in porphyrin-containing compound metabolism; protoporphyrin-IX biosynthesis; coproporphyrinogen-III from 5-aminolevulinate: step 4/4. Functionally, catalyzes the decarboxylation of four acetate groups of uroporphyrinogen-III to yield coproporphyrinogen-III. This is Uroporphyrinogen decarboxylase from Prochlorococcus marinus (strain SARG / CCMP1375 / SS120).